Here is a 556-residue protein sequence, read N- to C-terminus: Butanoate--CoA ligase AAE1 (556 aa).

The Microbody targeting signal signature appears at 554-556 (SKL).

The protein belongs to the ATP-dependent AMP-binding enzyme family. As to expression, expressed in roots, leaves, stems, flowers and developing seeds.

Its subcellular location is the peroxisome. It carries out the reaction butanoate + ATP + CoA = butanoyl-CoA + AMP + diphosphate. The catalysed reaction is hexanoate + ATP + CoA = hexanoyl-CoA + AMP + diphosphate. The enzyme catalyses pentanoate + ATP + CoA = pentanoyl-CoA + AMP + diphosphate. It catalyses the reaction 4-methylpentanoate + ATP + CoA = 4-methylpentanoyl-CoA + AMP + diphosphate. Functionally, catalyzes the ligation of CoA on butanoate to produce butanoyl-CoA. Can also use hexanoate, pentanoate and 4-methylpentanoate as substrates with a lower efficiency. The polypeptide is Butanoate--CoA ligase AAE1 (Arabidopsis thaliana (Mouse-ear cress)).